Consider the following 475-residue polypeptide: Sensor histidine kinase QseE (475 aa).

At 1–13 (MKRWPVFPRSLRQ) the chain is on the cytoplasmic side. The helical transmembrane segment at 14–34 (LVMLAFLLILLPLLVLAWQAW) threads the bilayer. Residues 35-173 (QSLNALSDQA…LQREIAERGQ (139 aa)) are Periplasmic-facing. Residues 174 to 194 (YFGWQSLVLFLVSLVMVLLFT) form a helical membrane-spanning segment. Residues 195-475 (RMIIGPVKNI…IELPSSKNTK (281 aa)) are Cytoplasmic-facing. The 217-residue stretch at 256–472 (HLSHELKTPL…CFRIELPSSK (217 aa)) folds into the Histidine kinase domain. His-259 is modified (phosphohistidine; by autocatalysis).

Autophosphorylated.

Its subcellular location is the cell inner membrane. It catalyses the reaction ATP + protein L-histidine = ADP + protein N-phospho-L-histidine.. Member of the two-component regulatory system QseF/QseE involved in the regulation of virulence and metabolism in EHEC. Required for pedestal formation in host epithelial cells during infection. Autophosphorylates in response to epinephrine, sulfate or phosphate and then probably transfers its phosphate group to QseF. This is Sensor histidine kinase QseE (qseE) from Escherichia coli O157:H7.